An 858-amino-acid chain; its full sequence is Polyhomeotic-like protein 2 (858 aa).

Disordered regions lie at residues 1-76 (MENE…QYLQ), 230-307 (QQTP…MEGR), 337-388 (PQPS…VALQ), 407-444 (LQCPTANLHKPGGSQQCHPPTPDTGPQNGHPEGVPHTP), 473-493 (KEVAPGEKSVPETRSGPSPHQ), and 529-561 (TDLSSPGMTSGNGNSASSIAGTAPQNGENKPPQ). 2 stretches are compositionally biased toward low complexity: residues 10–34 (TSSSACATSSTSGASSSSGCNNSSS) and 230–241 (QQTPAAAASGPT). The interaction with BMI1 stretch occupies residues 33–53 (SSGGSGRPTGPQISVYSGIPD). The span at 265-274 (PAQSRNTAQA) shows a compositional bias: polar residues. Positions 337 to 358 (PQPSSKHLQPQFVIQQQPQPQQ) are enriched in low complexity. Polar residues predominate over residues 379–388 (ASVSPSVALQ). Residues 473–483 (KEVAPGEKSVP) show a composition bias toward basic and acidic residues. The span at 537-551 (TSGNGNSASSIAGTA) shows a compositional bias: low complexity. Positions 558–587 (KPPQAIVKPQILTHVIEGFVIQEGAEPFPV) match the HD1 motif. Residues Lys-598 and Lys-600 each participate in a glycyl lysine isopeptide (Lys-Gly) (interchain with G-Cter in SUMO2) cross-link. Position 619 is a phosphothreonine (Thr-619). At Ser-621 the chain carries Phosphoserine. Lys-632 participates in a covalent cross-link: Glycyl lysine isopeptide (Lys-Gly) (interchain with G-Cter in SUMO2). An FCS-type zinc finger spans residues 633–667 (EEGAPLKLKCELCGRVDFAYKFKRSKRFCSMACAK). Zn(2+)-binding residues include Cys-642, Cys-645, Cys-661, and Cys-665. Disordered stretches follow at residues 688–720 (QKAGAATHNRRRASKASLPPLTKDTKKQPTGTV) and 732–768 (HSQEDSSRCSDNSSYEEPLSPISASSSTSRRRQGQRD). Residue Lys-702 forms a Glycyl lysine isopeptide (Lys-Gly) (interchain with G-Cter in SUMO2) linkage. Ser-751 is modified (phosphoserine). Positions 794 to 858 (WNVEDVYEFI…YARISMLKDS (65 aa)) constitute an SAM domain. A Glycyl lysine isopeptide (Lys-Gly) (interchain with G-Cter in SUMO2) cross-link involves residue Lys-847.

In terms of assembly, component of a PRC1-like complex. Interacts with CBX4. Interacts with BMI1, PCGF2, PHC1 and RNF2. Interacts with CHTOP. Interacts with the N-terminal region of the SP1 transcription factor and with MAPKAPK2. Interacts with SAMD7 and SAMD11.

It localises to the nucleus. Functionally, component of a Polycomb group (PcG) multiprotein PRC1-like complex, a complex class required to maintain the transcriptionally repressive state of many genes, including Hox genes, throughout development. PcG PRC1 complex acts via chromatin remodeling and modification of histones; it mediates monoubiquitination of histone H2A 'Lys-119', rendering chromatin heritably changed in its expressibility. This Homo sapiens (Human) protein is Polyhomeotic-like protein 2 (PHC2).